A 520-amino-acid polypeptide reads, in one-letter code: Beta-2-syntrophin (520 aa).

A disordered region spans residues 45-95; the sequence is EPPAAAFNGLPNGGGGESLPGSPNRGLGPPSPPAPPRGPAGEASASPPVRR. Over residues 63–72 the composition is skewed to low complexity; the sequence is LPGSPNRGLG. Pro residues predominate over residues 73–82; the sequence is PPSPPAPPRG. 8 positions are modified to phosphoserine: Ser-75, Ser-90, Ser-109, Ser-191, Ser-202, Ser-213, Ser-373, and Ser-375. Over residues 83 to 93 the composition is skewed to low complexity; the sequence is PAGEASASPPV. The PDZ domain occupies 95 to 178; it reads RVRVVKQEAG…EVLLEVKFIR (84 aa). PH domains lie at 143 to 280 and 305 to 417; these read ILSV…TNIM and EVKH…QGCH. The segment at 195-220 is disordered; the sequence is WEGASPQSPSFSGSEDSGSPKHQNTT. A compositionally biased stretch (low complexity) spans 197 to 211; the sequence is GASPQSPSFSGSEDS. An SU domain is found at 464–520; that stretch reads PFERLKMSADDGIRNLYLDFGGPEGELTMDLHSCPKPIVFVLHTFLSAKVTRMGLLV. The segment at 498 to 520 is calmodulin-binding; it reads PKPIVFVLHTFLSAKVTRMGLLV.

This sequence belongs to the syntrophin family. In terms of assembly, monomer and homodimer. Interacts with the dystrophin protein DMD and related protein DTNA; and with the other members of the syntrophin family: SNTA1 and SNTB1. Interacts with the neuroregulin receptor ERBB4. Interacts with PTPRN when phosphorylated, protecting PTPRN from protein cleavage by CAPN1. Dephosphorylation upon insulin stimulation disrupts the interaction with PTPRN and results in the cleavage of PTPRN. Interacts with the sodium channel proteins SCN4A and SCN5A. Interacts with SAST, MAST205, microtubules and microtubule-associated proteins. Interacts with the dystrophin related protein UTRN. Interacts with DTNB. Phosphorylated. Partially dephosphorylated upon insulin stimulation. In terms of tissue distribution, ubiquitous. Expressed at high levels in the testis.

The protein resides in the membrane. The protein localises to the cytoplasmic vesicle. Its subcellular location is the secretory vesicle membrane. It is found in the cell junction. It localises to the cytoplasm. The protein resides in the cytoskeleton. Adapter protein that binds to and probably organizes the subcellular localization of a variety of membrane proteins. May link various receptors to the actin cytoskeleton and the dystrophin glycoprotein complex. May play a role in the regulation of secretory granules via its interaction with PTPRN. The polypeptide is Beta-2-syntrophin (Sntb2) (Mus musculus (Mouse)).